The following is a 310-amino-acid chain: Methionyl-tRNA formyltransferase (310 aa).

A (6S)-5,6,7,8-tetrahydrofolate-binding site is contributed by 110–113 (SLLP).

This sequence belongs to the Fmt family.

It carries out the reaction L-methionyl-tRNA(fMet) + (6R)-10-formyltetrahydrofolate = N-formyl-L-methionyl-tRNA(fMet) + (6S)-5,6,7,8-tetrahydrofolate + H(+). In terms of biological role, attaches a formyl group to the free amino group of methionyl-tRNA(fMet). The formyl group appears to play a dual role in the initiator identity of N-formylmethionyl-tRNA by promoting its recognition by IF2 and preventing the misappropriation of this tRNA by the elongation apparatus. This is Methionyl-tRNA formyltransferase from Streptomyces griseus subsp. griseus (strain JCM 4626 / CBS 651.72 / NBRC 13350 / KCC S-0626 / ISP 5235).